Here is a 95-residue protein sequence, read N- to C-terminus: Large ribosomal subunit protein bL25 (95 aa).

Belongs to the bacterial ribosomal protein bL25 family. As to quaternary structure, part of the 50S ribosomal subunit; part of the 5S rRNA/L5/L18/L25 subcomplex. Contacts the 5S rRNA. Binds to the 5S rRNA independently of L5 and L18.

This is one of the proteins that binds to the 5S RNA in the ribosome where it forms part of the central protuberance. The chain is Large ribosomal subunit protein bL25 from Haemophilus influenzae (strain PittGG).